Here is a 210-residue protein sequence, read N- to C-terminus: Pyrrolidone-carboxylate peptidase (210 aa).

Residues Glu80, Cys143, and His162 contribute to the active site.

This sequence belongs to the peptidase C15 family. In terms of assembly, homotetramer.

The protein resides in the cytoplasm. The catalysed reaction is Release of an N-terminal pyroglutamyl group from a polypeptide, the second amino acid generally not being Pro.. Its function is as follows. Removes 5-oxoproline from various penultimate amino acid residues except L-proline. This Chromobacterium violaceum (strain ATCC 12472 / DSM 30191 / JCM 1249 / CCUG 213 / NBRC 12614 / NCIMB 9131 / NCTC 9757 / MK) protein is Pyrrolidone-carboxylate peptidase.